Consider the following 530-residue polypeptide: uncharacterized protein (530 aa).

Residues 1–33 form a disordered region; that stretch reads MNNMSLKFPDIAINSSESSDDEDPSSKNEKKDG. Residues 24–33 are compositionally biased toward basic and acidic residues; it reads PSSKNEKKDG. 12 helical membrane passes run 83–103, 124–144, 147–167, 181–201, 211–231, 244–264, 323–343, 346–366, 375–395, 404–424, 436–456, and 471–491; these read FFILPIMCITYGMQYLDKTAV, WLSTIFYLGYMIAQYPAGYLL, FPISYFMFIAAFLWSACVLLM, FFSGVFEGCVNPAFVALTAMW, VVSWYAFNGVAIMVGALLGYG, YPFLVIGAISTAWSFVYLFFP, VTNAMSVFSALIIQGIGYSGI, TLLTLPSGAFAVAGMIASGIF, IPLAMTTSSLTIVGSIMIWKI, VVGVWLFCTISSGNAVILSLL, TVNATMFLFYSIGNIVSPQLF, and SLVSVCLFEGVLALLAFYYIF.

Belongs to the major facilitator superfamily. Allantoate permease family.

It is found in the endoplasmic reticulum. It localises to the membrane. This is an uncharacterized protein from Schizosaccharomyces pombe (strain 972 / ATCC 24843) (Fission yeast).